Here is a 227-residue protein sequence, read N- to C-terminus: 2-C-methyl-D-erythritol 4-phosphate cytidylyltransferase (227 aa).

The protein belongs to the IspD/TarI cytidylyltransferase family. IspD subfamily.

It carries out the reaction 2-C-methyl-D-erythritol 4-phosphate + CTP + H(+) = 4-CDP-2-C-methyl-D-erythritol + diphosphate. The protein operates within isoprenoid biosynthesis; isopentenyl diphosphate biosynthesis via DXP pathway; isopentenyl diphosphate from 1-deoxy-D-xylulose 5-phosphate: step 2/6. Catalyzes the formation of 4-diphosphocytidyl-2-C-methyl-D-erythritol from CTP and 2-C-methyl-D-erythritol 4-phosphate (MEP). The polypeptide is 2-C-methyl-D-erythritol 4-phosphate cytidylyltransferase (Nostoc punctiforme (strain ATCC 29133 / PCC 73102)).